We begin with the raw amino-acid sequence, 375 residues long: Putative glycyl-radical enzyme activating enzyme MJ0021 (375 aa).

A Radical SAM core domain is found at 23 to 246 (QCVKGGKLVL…LKVIKEFKGD (224 aa)). Positions 38, 42, and 45 each coordinate [4Fe-4S] cluster. S-adenosyl-L-methionine contacts are provided by residues 44–46 (YCP) and G87.

Belongs to the organic radical-activating enzymes family. [4Fe-4S] cluster is required as a cofactor.

It catalyses the reaction glycyl-[protein] + reduced [flavodoxin] + S-adenosyl-L-methionine = glycin-2-yl radical-[protein] + semiquinone [flavodoxin] + 5'-deoxyadenosine + L-methionine + H(+). This Methanocaldococcus jannaschii (strain ATCC 43067 / DSM 2661 / JAL-1 / JCM 10045 / NBRC 100440) (Methanococcus jannaschii) protein is Putative glycyl-radical enzyme activating enzyme MJ0021.